The primary structure comprises 552 residues: Arginine--tRNA ligase (552 aa).

Residues 130–140 carry the 'HIGH' region motif; the sequence is ANPTGPIHLGG.

It belongs to the class-I aminoacyl-tRNA synthetase family. In terms of assembly, monomer.

It is found in the cytoplasm. The catalysed reaction is tRNA(Arg) + L-arginine + ATP = L-arginyl-tRNA(Arg) + AMP + diphosphate. In Nocardia farcinica (strain IFM 10152), this protein is Arginine--tRNA ligase.